A 453-amino-acid polypeptide reads, in one-letter code: Pup--protein ligase (453 aa).

Glu9 provides a ligand contact to Mg(2+). Arg53 contributes to the ATP binding site. Tyr55 contributes to the Mg(2+) binding site. The active-site Proton acceptor is the Asp57. Position 63 (Glu63) interacts with Mg(2+). ATP is bound by residues Thr66 and Trp420.

This sequence belongs to the Pup ligase/Pup deamidase family. Pup-conjugating enzyme subfamily.

It carries out the reaction ATP + [prokaryotic ubiquitin-like protein]-L-glutamate + [protein]-L-lysine = ADP + phosphate + N(6)-([prokaryotic ubiquitin-like protein]-gamma-L-glutamyl)-[protein]-L-lysine.. Its pathway is protein degradation; proteasomal Pup-dependent pathway. It functions in the pathway protein modification; protein pupylation. In terms of biological role, catalyzes the covalent attachment of the prokaryotic ubiquitin-like protein modifier Pup to the proteasomal substrate proteins, thereby targeting them for proteasomal degradation. This tagging system is termed pupylation. The ligation reaction involves the side-chain carboxylate of the C-terminal glutamate of Pup and the side-chain amino group of a substrate lysine. This Nocardioides sp. (strain ATCC BAA-499 / JS614) protein is Pup--protein ligase.